Reading from the N-terminus, the 427-residue chain is DNA topoisomerase 6 subunit A (427 aa).

The Topo IIA-type catalytic domain occupies 76 to 209 (LSLSSVQTEI…LNVIAAEKGV (134 aa)). Residue Tyr170 is the O-(5'-phospho-DNA)-tyrosine intermediate of the active site. The Mg(2+) site is built by Glu256 and Asp308.

The protein belongs to the TOP6A family. As to quaternary structure, homodimer. Heterotetramer of two TOP6A and two TOP6B subunits. Interacts with BIN4 and RHL1. Requires Mg(2+) as cofactor. In terms of tissue distribution, highly expressed in leaves, stems, flowers and seedlings.

The protein localises to the nucleus. It carries out the reaction ATP-dependent breakage, passage and rejoining of double-stranded DNA.. Component of the DNA topoisomerase VI involved in chromatin organization and progression of endoreduplication cycles. Relaxes both positive and negative superturns and exhibits a strong decatenase activity. Involved in cell-elongation processes. This Arabidopsis thaliana (Mouse-ear cress) protein is DNA topoisomerase 6 subunit A.